We begin with the raw amino-acid sequence, 341 residues long: HTH-type transcriptional repressor PurR (341 aa).

The region spanning 2 to 56 is the HTH lacI-type domain; that stretch reads ATIKDVAKRANVSTTTVSHVINKTRFVSEETRNAVWAAIKELHYSPSAVARSLKV. The H-T-H motif DNA-binding region spans 4-23; the sequence is IKDVAKRANVSTTTVSHVIN. The DNA-binding element occupies 48-56; the sequence is SAVARSLKV. Hypoxanthine-binding residues include Tyr-73, Arg-190, Thr-192, Phe-221, and Asp-275.

As to quaternary structure, homodimer.

The protein operates within purine metabolism; purine nucleotide biosynthesis [regulation]. In terms of biological role, is the main repressor of the genes involved in the de novo synthesis of purine nucleotides, regulating purB, purC, purEK, purF, purHD, purL, purMN and guaBA expression. PurR is allosterically activated to bind its cognate DNA by binding the purine corepressors, hypoxanthine or guanine, thereby effecting transcription repression. The chain is HTH-type transcriptional repressor PurR from Escherichia coli O139:H28 (strain E24377A / ETEC).